Consider the following 1276-residue polypeptide: Sterol regulatory element-binding protein cleavage-activating protein (1276 aa).

Residues 1–18 (MTLTERLREKISQAFYNH) are Cytoplasmic-facing. A helical membrane pass occupies residues 19-39 (GLLCASYPIPIILFTGLCILA). The Lumenal portion of the chain corresponds to 40–279 (CCYPLLKLPL…NLVHVHFKEE (240 aa)). The segment at 46–284 (KLPLPGTGPV…HFKEEIGIAE (239 aa)) is loop-1. Positions 60 to 81 (PVKGYSPPPADSDHKQGEPSEQ) are disordered. N-linked (GlcNAc...) asparagine glycosylation is present at N263. Residues 280 to 300 (IGIAELIPLVTTYIILFAYIY) traverse the membrane as a helical segment. An SSD domain is found at 284-442 (ELIPLVTTYI…MLFFTTVLSI (159 aa)). Residues 301–312 (FSTRKIDMVKSK) are Cytoplasmic-facing. The chain crosses the membrane as a helical span at residues 313 to 333 (WGLALAAVVTVLSSLLMSVGL). Residues 334–344 (CTLFGLTPTLN) are Lumenal-facing. A helical transmembrane segment spans residues 345-365 (GGEIFPYLVVVIGLENVLVLT). The Cytoplasmic portion of the chain corresponds to 366 to 401 (KSVVSTPVDLEVKLRIAQGLSSESWSIMKNVATELG). The chain crosses the membrane as a helical span at residues 402-422 (IILIGYFTLVPAIQEFCLFAV). Residue V423 is a topological domain, lumenal. The helical transmembrane segment at 424–444 (GLVSDFFLQMLFFTTVLSIDI) threads the bilayer. Residues 445 to 518 (RRMELADLNK…FLARTRLAQR (74 aa)) are Cytoplasmic-facing. Positions 447 to 452 (MELADL) match the ER export signal motif. Glycyl lysine isopeptide (Lys-Gly) (interchain with G-Cter in ubiquitin) cross-links involve residues K454 and K466. The helical transmembrane segment at 519–539 (LIMAGTVVWIGILVYTDPAGL) threads the bilayer. Residues 535–710 (DPAGLRTYLA…QTHGDITLYK (176 aa)) are loop-7. The Lumenal portion of the chain corresponds to 540 to 707 (RTYLAAQVTE…GGTQTHGDIT (168 aa)). N-linked (GlcNAc...) asparagine glycosylation is found at N590 and N641. The helical transmembrane segment at 708 to 728 (LYKVAALGLAAGIVLVLLLLC) threads the bilayer. The Cytoplasmic portion of the chain corresponds to 729–1276 (LYRVLCPRNY…YVPSVLEKLD (548 aa)). Residues 731-1276 (RVLCPRNYGQ…YVPSVLEKLD (546 aa)) form an interaction with SREBF2 region. The WD 1 repeat unit spans residues 771–811 (VLRGHLMDIECLASDGMLLVSCCLAGQVCVWDAQTGDCLTR). Phosphoserine is present on residues S821, S837, S843, S850, S905, and S934. The tract at residues 834 to 903 (ERLSDGGKAS…RHRAGCGRSR (70 aa)) is disordered. Residues 928-958 (SALRPPSPGPPLPQASQEEGTAPEKGSPPLA) are disordered. WD repeat units follow at residues 949-999 (APEK…LCCS) and 1002-1039 (EISS…SLSP). R1048 bears the Omega-N-methylarginine mark. WD repeat units follow at residues 1074–1111 (AHQK…CLFT), 1114–1152 (GHSG…RVSH), 1155–1192 (AHRG…KLYS), and 1194–1232 (QQDL…LLQT).

Belongs to the WD repeat SCAP family. In terms of assembly, membrane region forms a homotetramer. Component of the SCAP-SREBP complex (composed of SCAP and SREBF1/SREBP1 or SREBF2/SREBP2); interacts with SREBF1/SREBP1 or SREBF2/SREBP2 through its C-terminal cytoplasmic domain. Forms a ternary complex with INSIG1 or INSIG2 through its transmembrane domains at high sterol concentrations. Interacts with PAQR3; the interaction anchors the SCAP-SREBP complex to the Golgi apparatus in low cholesterol conditions. Interacts with the SEC23-SEC24 complex in a SAR1-GTP-dependent manner through an ER export signal in its third cytoplasmic loop. Interacts with RNF139; the interaction inhibits the interaction of SCAP with SEC24B and hampering the ER to Golgi transport of the SCAP-SREBP complex. Interacts with SPRING1. In terms of processing, ubiquitinated at Lys-454 and Lys-466. RNF145 triggers ubiquitination of SCAP, likely inhibiting SCAP-SREBP complex transport to the Golgi apparatus and the subsequent processing/maturation of SREBF2/SREBP2.

Its subcellular location is the endoplasmic reticulum membrane. The protein resides in the golgi apparatus membrane. The protein localises to the cytoplasmic vesicle. It is found in the COPII-coated vesicle membrane. In terms of biological role, escort protein required for cholesterol as well as lipid homeostasis. Regulates export of the SCAP-SREBP complex from the endoplasmic reticulum to the Golgi upon low cholesterol, thereby regulating the processing of sterol regulatory element-binding proteins (SREBPs) SREBF1/SREBP1 and SREBF2/SREBP2. At high sterol concentrations, formation of a ternary complex with INSIG (INSIG1 or INSIG2) leads to mask the ER export signal in SCAP, promoting retention of the complex in the endoplasmic reticulum. Low sterol concentrations trigger release of INSIG, a conformational change in the SSD domain of SCAP, unmasking of the ER export signal, promoting recruitment into COPII-coated vesicles and transport of the SCAP-SREBP to the Golgi: in the Golgi, SREBPs are then processed, releasing the transcription factor fragment of SREBPs from the membrane, its import into the nucleus and up-regulation of LDLR, INSIG1 and the mevalonate pathway. Binds cholesterol via its SSD domain. The chain is Sterol regulatory element-binding protein cleavage-activating protein from Rattus norvegicus (Rat).